We begin with the raw amino-acid sequence, 1263 residues long: DNA-directed RNA polymerase subunit beta (1263 aa).

The protein belongs to the RNA polymerase beta chain family. As to quaternary structure, the RNAP catalytic core consists of 2 alpha, 1 beta, 1 beta' and 1 omega subunit. When a sigma factor is associated with the core the holoenzyme is formed, which can initiate transcription.

The catalysed reaction is RNA(n) + a ribonucleoside 5'-triphosphate = RNA(n+1) + diphosphate. Functionally, DNA-dependent RNA polymerase catalyzes the transcription of DNA into RNA using the four ribonucleoside triphosphates as substrates. This chain is DNA-directed RNA polymerase subunit beta, found in Thermotoga maritima (strain ATCC 43589 / DSM 3109 / JCM 10099 / NBRC 100826 / MSB8).